The sequence spans 195 residues: dCTP deaminase, dUMP-forming (195 aa).

DCTP contacts are provided by residues 105-110 (RSSLGR), aspartate 123, 131-133 (TLE), glutamine 152, tyrosine 166, lysine 173, and glutamine 177. Glutamate 133 acts as the Proton donor/acceptor in catalysis. The interval 161–195 (PADRPYGDERGSKYQDQDGPQASRIRGDREFGGTQ) is disordered. Positions 165-176 (PYGDERGSKYQD) are enriched in basic and acidic residues. Over residues 185-195 (IRGDREFGGTQ) the composition is skewed to basic and acidic residues.

This sequence belongs to the dCTP deaminase family. As to quaternary structure, homotrimer.

The catalysed reaction is dCTP + 2 H2O = dUMP + NH4(+) + diphosphate. It participates in pyrimidine metabolism; dUMP biosynthesis; dUMP from dCTP: step 1/1. In terms of biological role, bifunctional enzyme that catalyzes both the deamination of dCTP to dUTP and the hydrolysis of dUTP to dUMP without releasing the toxic dUTP intermediate. In Halobacterium salinarum (strain ATCC 700922 / JCM 11081 / NRC-1) (Halobacterium halobium), this protein is dCTP deaminase, dUMP-forming.